The chain runs to 243 residues: Segregation and condensation protein A (243 aa).

This sequence belongs to the ScpA family. In terms of assembly, component of a cohesin-like complex composed of ScpA, ScpB and the Smc homodimer, in which ScpA and ScpB bind to the head domain of Smc. The presence of the three proteins is required for the association of the complex with DNA.

It is found in the cytoplasm. Participates in chromosomal partition during cell division. May act via the formation of a condensin-like complex containing Smc and ScpB that pull DNA away from mid-cell into both cell halves. In Staphylococcus haemolyticus (strain JCSC1435), this protein is Segregation and condensation protein A.